A 483-amino-acid chain; its full sequence is Regulatory protein ViaA (483 aa).

This sequence belongs to the ViaA family. In terms of assembly, homodimer. Interacts with RavA.

The protein localises to the cytoplasm. Component of the RavA-ViaA chaperone complex, which may act on the membrane to optimize the function of some of the respiratory chains. ViaA stimulates the ATPase activity of RavA. The chain is Regulatory protein ViaA from Shigella flexneri serotype 5b (strain 8401).